Consider the following 152-residue polypeptide: Deoxyuridine 5'-triphosphate nucleotidohydrolase (152 aa).

Substrate-binding positions include 72 to 74, N85, and 89 to 91; these read RSG and TID.

It belongs to the dUTPase family. Requires Mg(2+) as cofactor.

The enzyme catalyses dUTP + H2O = dUMP + diphosphate + H(+). The protein operates within pyrimidine metabolism; dUMP biosynthesis; dUMP from dCTP (dUTP route): step 2/2. In terms of biological role, this enzyme is involved in nucleotide metabolism: it produces dUMP, the immediate precursor of thymidine nucleotides and it decreases the intracellular concentration of dUTP so that uracil cannot be incorporated into DNA. The sequence is that of Deoxyuridine 5'-triphosphate nucleotidohydrolase from Afipia carboxidovorans (strain ATCC 49405 / DSM 1227 / KCTC 32145 / OM5) (Oligotropha carboxidovorans).